We begin with the raw amino-acid sequence, 35 residues long: Coenzyme PQQ synthesis protein A (35 aa).

The pyrroloquinoline quinone (Glu-Tyr) cross-link spans 16–20 (EINMY).

Belongs to the PqqA family.

It functions in the pathway cofactor biosynthesis; pyrroloquinoline quinone biosynthesis. Its function is as follows. Required for coenzyme pyrroloquinoline quinone (PQQ) biosynthesis. PQQ is probably formed by cross-linking a specific glutamate to a specific tyrosine residue and excising these residues from the peptide. The protein is Coenzyme PQQ synthesis protein A of Roseobacter denitrificans (strain ATCC 33942 / OCh 114) (Erythrobacter sp. (strain OCh 114)).